Reading from the N-terminus, the 327-residue chain is Putative ABC transporter ATP-binding protein MM_0887 (327 aa).

The disordered stretch occupies residues 1–44 (MSKSTPLKSSIIRADLPEQAEGRTGPETGKDPEKTGNSEGKTDT). Positions 28–44 (TGKDPEKTGNSEGKTDT) are enriched in basic and acidic residues. In terms of domain architecture, ABC transporter spans 47 to 282 (IEIKDLCHRY…PALLRKAHLR (236 aa)). 81-88 (GANGAGKS) contacts ATP.

The protein belongs to the ABC transporter superfamily.

The protein localises to the cell membrane. Its function is as follows. Probably part of an ABC transporter complex. Responsible for energy coupling to the transport system. This Methanosarcina mazei (strain ATCC BAA-159 / DSM 3647 / Goe1 / Go1 / JCM 11833 / OCM 88) (Methanosarcina frisia) protein is Putative ABC transporter ATP-binding protein MM_0887.